Consider the following 182-residue polypeptide: Ribosome maturation factor RimM (182 aa).

The region spanning 103–182 is the PRC barrel domain; sequence EGDYYWKDLM…TIEVDWDPGF (80 aa).

It belongs to the RimM family. As to quaternary structure, binds ribosomal protein uS19.

It localises to the cytoplasm. An accessory protein needed during the final step in the assembly of 30S ribosomal subunit, possibly for assembly of the head region. Essential for efficient processing of 16S rRNA. May be needed both before and after RbfA during the maturation of 16S rRNA. It has affinity for free ribosomal 30S subunits but not for 70S ribosomes. The sequence is that of Ribosome maturation factor RimM from Klebsiella pneumoniae subsp. pneumoniae (strain ATCC 700721 / MGH 78578).